Consider the following 353-residue polypeptide: MTAILAKNEASSLWARFCEWITSTENRLYIGWFGVIMIPTLLTATSVFIIAFIAAPPVDIDGIREPVSGSLLYGNNIISGAVVPTSNAIGLHFYPIWEAASLDEWLYNGGPYQLIVCHFFLGICCYMGREWELSYRLGMRPWIAVAYSAPVAAATAVFIIYPIGQGSFSDGMPLGISGTFNFMIVFQAEHNILMHPFHMLGVAGVFGGSLFSAMHGSLVTSSLIRETTENESANEGYKFGQEEETYNIVAAHGYFGRLIFQYASFNNSRSLHFFLAAWPVVGIWFTALGISTMAFNLNGFNFNQSVVDSQGRVLNTWADIINRANLGMEVMHERNAHNFPLDLASVEAPSVNA.

At Thr-2 the chain carries N-acetylthreonine. Thr-2 is modified (phosphothreonine). Helical transmembrane passes span 29–46 (YIGWFGVIMIPTLLTATS), 118–133 (HFFLGICCYMGREWEL), and 142–156 (WIAVAYSAPVAAATA). Residue His-118 coordinates chlorophyll a. Tyr-126 serves as a coordination point for pheophytin a. 2 residues coordinate [CaMn4O5] cluster: Asp-170 and Glu-189. A helical transmembrane segment spans residues 197–218 (FHMLGVAGVFGGSLFSAMHGSL). His-198 contacts chlorophyll a. Residues His-215 and 264 to 265 (SF) each bind a quinone. His-215 is a binding site for Fe cation. His-272 contributes to the Fe cation binding site. A helical membrane pass occupies residues 274–288 (FLAAWPVVGIWFTAL). [CaMn4O5] cluster contacts are provided by His-332, Glu-333, Asp-342, and Ala-344. Residues 345-353 (SVEAPSVNA) constitute a propeptide that is removed on maturation.

The protein belongs to the reaction center PufL/M/PsbA/D family. PSII is composed of 1 copy each of membrane proteins PsbA, PsbB, PsbC, PsbD, PsbE, PsbF, PsbH, PsbI, PsbJ, PsbK, PsbL, PsbM, PsbT, PsbX, PsbY, PsbZ, Psb30/Ycf12, at least 3 peripheral proteins of the oxygen-evolving complex and a large number of cofactors. It forms dimeric complexes. Requires The D1/D2 heterodimer binds P680, chlorophylls that are the primary electron donor of PSII, and subsequent electron acceptors. It shares a non-heme iron and each subunit binds pheophytin, quinone, additional chlorophylls, carotenoids and lipids. D1 provides most of the ligands for the Mn4-Ca-O5 cluster of the oxygen-evolving complex (OEC). There is also a Cl(-1) ion associated with D1 and D2, which is required for oxygen evolution. The PSII complex binds additional chlorophylls, carotenoids and specific lipids. as cofactor. Post-translationally, the 9 C-terminal residues are removed, probably by CTPA (AC O04073); processing is essential to allow assembly of the oxygen-evolving complex and thus photosynthetic growth. In terms of processing, tyr-161 forms a radical intermediate that is referred to as redox-active TyrZ, YZ or Y-Z.

The protein localises to the plastid. It localises to the chloroplast thylakoid membrane. It catalyses the reaction 2 a plastoquinone + 4 hnu + 2 H2O = 2 a plastoquinol + O2. Its function is as follows. Photosystem II (PSII) is a light-driven water:plastoquinone oxidoreductase that uses light energy to abstract electrons from H(2)O, generating O(2) and a proton gradient subsequently used for ATP formation. It consists of a core antenna complex that captures photons, and an electron transfer chain that converts photonic excitation into a charge separation. The D1/D2 (PsbA/PsbD) reaction center heterodimer binds P680, the primary electron donor of PSII as well as several subsequent electron acceptors. The protein is Photosystem II protein D1 of Tetradesmus obliquus (Green alga).